The primary structure comprises 92 residues: Large ribosomal subunit protein uL23 (92 aa).

Belongs to the universal ribosomal protein uL23 family. Part of the 50S ribosomal subunit. Contacts protein L29, and trigger factor when it is bound to the ribosome.

Functionally, one of the early assembly proteins it binds 23S rRNA. One of the proteins that surrounds the polypeptide exit tunnel on the outside of the ribosome. Forms the main docking site for trigger factor binding to the ribosome. This Bdellovibrio bacteriovorus (strain ATCC 15356 / DSM 50701 / NCIMB 9529 / HD100) protein is Large ribosomal subunit protein uL23.